Consider the following 117-residue polypeptide: Large ribosomal subunit protein uL18 (117 aa).

This sequence belongs to the universal ribosomal protein uL18 family. Part of the 50S ribosomal subunit; part of the 5S rRNA/L5/L18/L25 subcomplex. Contacts the 5S and 23S rRNAs.

Its function is as follows. This is one of the proteins that bind and probably mediate the attachment of the 5S RNA into the large ribosomal subunit, where it forms part of the central protuberance. The protein is Large ribosomal subunit protein uL18 of Francisella tularensis subsp. tularensis (strain FSC 198).